A 412-amino-acid polypeptide reads, in one-letter code: uncharacterized protein (412 aa).

Positions 1–21 are cleaved as a signal peptide; the sequence is MIIPMLRILLIVLFVLNLVTS. Disordered regions lie at residues 85-134, 250-294, and 327-357; these read QPPA…STTT, STTE…TPGT, and VELGEGDDDEENDDDSSEEEETKPPARHVRE. Low complexity predominate over residues 88–105; that stretch reads ASLTSLPAAPPSAQVAPP. The span at 124–134 shows a compositional bias: polar residues; that stretch reads TPQASISSTTT. Low complexity-rich tracts occupy residues 250-259 and 266-293; these read STTENTTEQS and TTSTYSTTTTAPVNTTSAPTTTHLGTPG. A compositionally biased stretch (acidic residues) spans 330–347; the sequence is GEGDDDEENDDDSSEEEE. Basic and acidic residues predominate over residues 348–357; that stretch reads TKPPARHVRE. The 38-residue stretch at 371 to 408 folds into the ShKT domain; sequence CDEEEDDKGKICKLWAAGGLCGTHKPTMFLFCRKTCLC.

This is an uncharacterized protein from Caenorhabditis elegans.